A 269-amino-acid chain; its full sequence is Adenylate kinase (269 aa).

Residue 61–66 (GAGKGT) coordinates ATP. Residues 81–110 (ATGDMLREQVARQTELGKAAKQIMDQGGLV) are NMP. AMP-binding positions include Thr82, Arg87, 108 to 110 (GLV), 137 to 140 (GFPR), and Gln144. The LID stretch occupies residues 178 to 215 (GRLVHPASGRSYHKEFNPPKKPMTDDITGEPLIQRSDD). Residues Arg179 and 188 to 189 (SY) contribute to the ATP site. The AMP site is built by Arg212 and Arg223. Residue Gln251 coordinates ATP.

The protein belongs to the adenylate kinase family. AK2 subfamily. Monomer.

Its subcellular location is the cytoplasm. It is found in the cytosol. It localises to the mitochondrion intermembrane space. The catalysed reaction is AMP + ATP = 2 ADP. Its function is as follows. Catalyzes the reversible transfer of the terminal phosphate group between ATP and AMP. Plays an important role in cellular energy homeostasis and in adenine nucleotide metabolism. Adenylate kinase activity is critical for regulation of the phosphate utilization and the AMP de novo biosynthesis pathways. The chain is Adenylate kinase from Cryptococcus neoformans var. neoformans serotype D (strain B-3501A) (Filobasidiella neoformans).